A 1183-amino-acid chain; its full sequence is Formin-like protein (1183 aa).

2 disordered regions span residues 1–44 (MGAV…SISS) and 63–82 (QHVRQPSLRSRSQQPMPTTD). Over residues 23-36 (PHSHAHHHSMRNGH) the composition is skewed to basic residues. Residues 63 to 79 (QHVRQPSLRSRSQQPMP) show a composition bias toward polar residues. The 484-residue stretch at 76–559 (QPMPTTDELD…HNEQELKKRD (484 aa)) folds into the GBD/FH3 domain. Residue S225 is modified to Phosphoserine. The segment covering 572–584 (LSRSLPRSASSGD) has biased composition (polar residues). Residues 572-681 (LSRSLPRSAS…PPVAGFMPAP (110 aa)) form a disordered region. 2 stretches are compositionally biased toward pro residues: residues 605 to 614 (LPPPPPPMPA) and 622 to 640 (APPPPPPPAPPAPPPPPGF). Residues 641–654 (SPLGSPSGSLASTA) show a composition bias toward low complexity. Residues 687–1088 (IKRKVPTKYK…AALAASKKEN (402 aa)) form the FH2 domain. The DAD domain maps to 1136-1169 (DEVYNGALEDILLGLKSEPYRRADAVRRSQRRRI).

It belongs to the formin homology family. Self-associates. Interacts (via GBD/FH3 domain) with Cdc42; the interaction is stronger with the GTP bound form of Cdc42.

Functionally, together with Cdc42, involved in establishment of planar cell polarity in the developing compound eye by contributing to ommatidial rotation. Together with DAAM and Cdc42, has a role in neuronal development of mushroom bodies. The sequence is that of Formin-like protein from Drosophila melanogaster (Fruit fly).